The chain runs to 341 residues: Tryptophan--tRNA ligase (341 aa).

ATP contacts are provided by residues 11-13 and 19-20; these read RPT and GH. A 'HIGH' region motif is present at residues 12–20; sequence PTGKLHIGH. Aspartate 140 is an L-tryptophan binding site. Residues 152–154, leucine 194, and 202–206 contribute to the ATP site; these read GTD and KMSKS. The 'KMSKS' region signature appears at 202–206; it reads KMSKS.

It belongs to the class-I aminoacyl-tRNA synthetase family. Homodimer.

Its subcellular location is the cytoplasm. It carries out the reaction tRNA(Trp) + L-tryptophan + ATP = L-tryptophyl-tRNA(Trp) + AMP + diphosphate + H(+). In terms of biological role, catalyzes the attachment of tryptophan to tRNA(Trp). The polypeptide is Tryptophan--tRNA ligase (Streptococcus pneumoniae serotype 4 (strain ATCC BAA-334 / TIGR4)).